The chain runs to 510 residues: ATP synthase subunit alpha (510 aa).

Residue 169–176 (GDRQTGKT) coordinates ATP.

Belongs to the ATPase alpha/beta chains family. F-type ATPases have 2 components, CF(1) - the catalytic core - and CF(0) - the membrane proton channel. CF(1) has five subunits: alpha(3), beta(3), gamma(1), delta(1), epsilon(1). CF(0) has three main subunits: a(1), b(2) and c(9-12). The alpha and beta chains form an alternating ring which encloses part of the gamma chain. CF(1) is attached to CF(0) by a central stalk formed by the gamma and epsilon chains, while a peripheral stalk is formed by the delta and b chains.

The protein resides in the cell inner membrane. It carries out the reaction ATP + H2O + 4 H(+)(in) = ADP + phosphate + 5 H(+)(out). Produces ATP from ADP in the presence of a proton gradient across the membrane. The alpha chain is a regulatory subunit. This is ATP synthase subunit alpha from Afipia carboxidovorans (strain ATCC 49405 / DSM 1227 / KCTC 32145 / OM5) (Oligotropha carboxidovorans).